A 172-amino-acid polypeptide reads, in one-letter code: MALRIEDKKAIVAEVAEQVSSALSAAVADYRGLTVNEMTSLRKQARESGVYLRVVRNNLARLAIKGTDFECLGDALKGPLVLALSKDEPGAAAKLFKSFQKDHNAFEVKNLAMSGELFGPEKLDDFAKLPTREEALATLLNVMQAPVTKFVRTLNEIPSQAVRVFAAVGDSK.

The protein belongs to the universal ribosomal protein uL10 family. Part of the ribosomal stalk of the 50S ribosomal subunit. The N-terminus interacts with L11 and the large rRNA to form the base of the stalk. The C-terminus forms an elongated spine to which L12 dimers bind in a sequential fashion forming a multimeric L10(L12)X complex.

Functionally, forms part of the ribosomal stalk, playing a central role in the interaction of the ribosome with GTP-bound translation factors. The polypeptide is Large ribosomal subunit protein uL10 (Francisella philomiragia subsp. philomiragia (strain ATCC 25017 / CCUG 19701 / FSC 153 / O#319-036)).